The following is a 1205-amino-acid chain: A disintegrin and metalloproteinase with thrombospondin motifs 3 (1205 aa).

A signal peptide spans 1–20 (MVLLSLWLIAAALVEVRTSA). Positions 21–249 (DGQAGNEEMV…QLNETMRRRR (229 aa)) are excised as a propeptide. Residues Asn83, Asn119, Asn242, and Asn345 are each glycosylated (N-linked (GlcNAc...) asparagine). A Peptidase M12B domain is found at 256 to 460 (YNIEVLLGVD…HSYDCLLDDP (205 aa)). Disulfide bonds link Cys333-Cys382, Cys376-Cys455, and Cys415-Cys441. A Zn(2+)-binding site is contributed by His398. Residue Glu399 is part of the active site. The Zn(2+) site is built by His402 and His408. The 81-residue stretch at 470–550 (ELPGINYSMD…MWKNANQQKQ (81 aa)) folds into the Disintegrin domain. Asn475 carries an N-linked (GlcNAc...) asparagine glycan. 7 disulfide bridges follow: Cys482-Cys507, Cys493-Cys516, Cys502-Cys535, Cys529-Cys540, Cys563-Cys600, Cys567-Cys605, and Cys578-Cys590. Residues 551-606 (DGNWGSWTKFGSCSRTCGTGVRFRTRQCNNPMPINGGQDCPGVNFEYQLCNTEECQ) form the TSP type-1 1 domain. Residues 713–844 (RTVKGTFTRT…NSNNVIQEEL (132 aa)) are spacer. The N-linked (GlcNAc...) asparagine glycan is linked to Asn814. 3 TSP type-1 domains span residues 845-905 (DTFE…QECT), 906-965 (HPLW…NRVP), and 966-1014 (CPAQ…QLPP). Asn942 carries an N-linked (GlcNAc...) asparagine glycan. 3 disulfide bridges follow: Cys978–Cys1010, Cys982–Cys1015, and Cys993–Cys999. The PLAC domain occupies 1015 to 1054 (CNDEPCLGDKSIFCQMEVLARYCSIPGYNKLCCESCSKRS). The segment at 1174-1205 (DSIGASSQARTSKKDGKIIDNRRPTRSSTLER) is disordered. Residues 1185–1205 (SKKDGKIIDNRRPTRSSTLER) are compositionally biased toward basic and acidic residues.

The cofactor is Zn(2+). Post-translationally, the precursor is cleaved by a furin endopeptidase. In terms of processing, glycosylated. Can be O-fucosylated by POFUT2 on a serine or a threonine residue found within the consensus sequence C1-X(2)-(S/T)-C2-G of the TSP type-1 repeat domains where C1 and C2 are the first and second cysteine residue of the repeat, respectively. Fucosylated repeats can then be further glycosylated by the addition of a beta-1,3-glucose residue by the glucosyltransferase, B3GALTL. Fucosylation mediates the efficient secretion of ADAMTS family members. Can also be C-glycosylated with one or two mannose molecules on tryptophan residues within the consensus sequence W-X-X-W of the TPRs, and N-glycosylated. These other glycosylations can also facilitate secretion. Found in cartilage and skin.

The protein localises to the secreted. It localises to the extracellular space. Its subcellular location is the extracellular matrix. Cleaves the propeptides of type II collagen prior to fibril assembly. Does not act on types I and III collagens. The chain is A disintegrin and metalloproteinase with thrombospondin motifs 3 (ADAMTS3) from Homo sapiens (Human).